The primary structure comprises 256 residues: UPF0259 membrane protein plu2479 (256 aa).

Transmembrane regions (helical) follow at residues 23-43, 89-109, 132-152, 192-212, and 221-241; these read TLTLAVLAALVTTLLGHLFIP, IFSSMIGSVLLVGGVLTLVAA, LFLLLLICTLLIQFGLMLMLV, LLVPAILLWLTARLLLVFIID, and MAGIILGVFNNLISAILLIYL.

Belongs to the UPF0259 family.

The protein resides in the cell inner membrane. This Photorhabdus laumondii subsp. laumondii (strain DSM 15139 / CIP 105565 / TT01) (Photorhabdus luminescens subsp. laumondii) protein is UPF0259 membrane protein plu2479.